The primary structure comprises 162 residues: Protein A49 (162 aa).

The protein belongs to the poxviridae A49 protein family.

The protein is Protein A49 of Homo sapiens (Human).